The chain runs to 338 residues: Aspartate carbamoyltransferase catalytic subunit (338 aa).

Residues Arg59 and Thr60 each contribute to the carbamoyl phosphate site. Lys87 is a binding site for L-aspartate. Residues Arg109, His142, and Gln145 each coordinate carbamoyl phosphate. Residues Arg182 and Arg253 each coordinate L-aspartate. 2 residues coordinate carbamoyl phosphate: Gly294 and Pro295.

Belongs to the aspartate/ornithine carbamoyltransferase superfamily. ATCase family. Heterododecamer (2C3:3R2) of six catalytic PyrB chains organized as two trimers (C3), and six regulatory PyrI chains organized as three dimers (R2).

The catalysed reaction is carbamoyl phosphate + L-aspartate = N-carbamoyl-L-aspartate + phosphate + H(+). It participates in pyrimidine metabolism; UMP biosynthesis via de novo pathway; (S)-dihydroorotate from bicarbonate: step 2/3. Catalyzes the condensation of carbamoyl phosphate and aspartate to form carbamoyl aspartate and inorganic phosphate, the committed step in the de novo pyrimidine nucleotide biosynthesis pathway. The chain is Aspartate carbamoyltransferase catalytic subunit from Prochlorococcus marinus (strain MIT 9301).